The following is a 566-amino-acid chain: Transmembrane protein 151B (566 aa).

The segment covering methionine 1 to serine 11 has biased composition (low complexity). The disordered stretch occupies residues methionine 1–serine 25. Residues alanine 12–glycine 23 are compositionally biased toward gly residues. 2 helical membrane passes run cysteine 65–threonine 85 and tyrosine 112–tryptophan 132. The segment covering valine 495–serine 512 has biased composition (polar residues). A disordered region spans residues valine 495–proline 529. The span at glycine 514–alanine 524 shows a compositional bias: acidic residues.

Belongs to the TMEM151 family.

It localises to the membrane. The polypeptide is Transmembrane protein 151B (TMEM151B) (Homo sapiens (Human)).